The primary structure comprises 1100 residues: Regulator of nonsense transcripts 1 (1100 aa).

A compositionally biased stretch (low complexity) spans 42-53 (SQTQTQGQTQSQ). A disordered region spans residues 42-67 (SQTQTQGQTQSQLDNQVNGPDGVLPN). In terms of domain architecture, Upf1 CH-rich spans 94-251 (TKDLPVHACS…NKLEELWKEN (158 aa)). Positions 102, 105, 116, 119, 124, 134, 138, 144, 162, 165, 188, and 192 each coordinate Zn(2+). The segment at 102–134 (CSYCGIHDPACVVYCNTSKKWFCNGRGNTSGSH) is C3H. Positions 116–144 (CNTSKKWFCNGRGNTSGSHIVNHLVRAKC) are CC/SHH/C. The C4 stretch occupies residues 162–192 (CYNCGCRNVFLLGFIPAKADSVVVLLCRQPC). Residues glutamine 455, 475-479 (GTGKT), glutamine 645, tyrosine 682, and glutamate 813 each bind ATP. The disordered stretch occupies residues 978–1065 (LGQVNGPAAG…QPELSQDSYL (88 aa)). Over residues 982 to 993 (NGPAAGRGAPKG) the composition is skewed to low complexity. Positions 1012 to 1063 (SGQPNMPNSQASQDLVSQPFSQGPLTQGYITMSQPSQMSQPGLSQPELSQDS) are enriched in polar residues.

Belongs to the DNA2/NAM7 helicase family.

Its subcellular location is the cytoplasm. The protein resides in the P-body. It localises to the nucleus. The protein localises to the perinuclear region. Functionally, RNA-dependent helicase and ATPase required for nonsense-mediated decay (NMD) of mRNAs containing premature stop codons. Is recruited to mRNAs upon translation termination and undergoes a cycle of phosphorylation and dephosphorylation; its phosphorylation appears to be a key step in NMD. The formation of an upf1-upf2-upf3 surveillance complex is believed to activate NMD. This chain is Regulator of nonsense transcripts 1, found in Danio rerio (Zebrafish).